The sequence spans 102 residues: Large ribosomal subunit protein bL21 (102 aa).

It belongs to the bacterial ribosomal protein bL21 family. As to quaternary structure, part of the 50S ribosomal subunit. Contacts protein L20.

This protein binds to 23S rRNA in the presence of protein L20. The polypeptide is Large ribosomal subunit protein bL21 (Campylobacter jejuni subsp. doylei (strain ATCC BAA-1458 / RM4099 / 269.97)).